A 710-amino-acid chain; its full sequence is Prolyl endopeptidase (710 aa).

Residue M1 is modified to N-acetylmethionine. K157 carries the N6-acetyllysine modification. Residues S554, D641, and H680 each act as charge relay system in the active site.

The protein belongs to the peptidase S9A family. As to expression, expressed in all tissues tested: uterus, kidney, heart, lung, small intestine, smooth muscle, liver, spleen, thymus, adrenal, pituitary and whole brain.

The protein resides in the cytoplasm. The enzyme catalyses Hydrolysis of Pro-|-Xaa &gt;&gt; Ala-|-Xaa in oligopeptides.. Its activity is regulated as follows. Inhibited by DFP, Z-Pro-prolinal and poststatin, but not by PMSF, SBTI, EDTA, leupeptin, E-64 and pepstatin. In terms of biological role, cleaves peptide bonds on the C-terminal side of prolyl residues within peptides that are up to approximately 30 amino acids long. Has high activity on the succinyl- (suc-) peptide-4-methylcoumaryl-7-amide (MCA) substrates suc-Gly-Pro-Leu-Gly-Pro-MCA, suc-Gly-Pro-MCA and suc-Ala-Ala-Ala-MCA. The sequence is that of Prolyl endopeptidase from Rattus norvegicus (Rat).